The primary structure comprises 2058 residues: Unconventional myosin-X (2058 aa).

M1 carries the post-translational modification N-acetylmethionine. Residues 63 to 739 (EGVDDMASLT…LEQKLEKRRE (677 aa)) enclose the Myosin motor domain. Residues N104, Y113, 160–165 (GAGKTE), and N215 contribute to the ATP site. An actin-binding region spans residues 619 to 641 (LHSLMATLSSSNPFFVRCIKPNM). 3 IQ domains span residues 742-763 (VSHA…KQYR), 764-787 (KVLY…RFLH), and 788-817 (LKKA…EKRE). An SAH region spans residues 814 to 883 (EKREQEEKKK…LTRELEKQKE (70 aa)). Disordered stretches follow at residues 819 to 840 (EEKK…RERE) and 847 to 866 (ELRA…EALQ). Over residues 847–861 (ELRAQQEEETRKQQE) the composition is skewed to basic and acidic residues. Positions 884-934 (NKQVEEILRLEKEIEDLQRMKEQQELSLTEASLQKLQERRDQELRRLEEEA) form a coiled coil. 3 positions are modified to phosphoserine: S962, S965, and S968. Residues 964 to 1090 (GSEFSSELAE…DLPSPDGDYD (127 aa)) are disordered. Acidic residues predominate over residues 989–1003 (PEEEVDEGFEADDDA). Over residues 1040 to 1049 (VVPTSPSADS) the composition is skewed to polar residues. A compositionally biased stretch (low complexity) spans 1060–1071 (SGSLHNSSSGES). A Phosphothreonine modification is found at T1158. PH domains follow at residues 1212–1310 (EALK…QVHA) and 1392–1497 (EFIV…NVTD). Residues 1547-1695 (LPYGDINLNL…PSRDEIEALI (149 aa)) form the MyTH4 domain. In terms of domain architecture, FERM spans 1700-2044 (MTSTVYCHGG…AYISMIVKKR (345 aa)).

This sequence belongs to the TRAFAC class myosin-kinesin ATPase superfamily. Myosin family. As to quaternary structure, monomer, when in an inactive conformation in the cytosol. Homodimer in its active, membrane-bound conformation; antiparallel coiled coil-mediated dimer formation. Interacts strongly with CALM3 and weakly with CALM, the CALM3 interaction is essential for function in filopodial extension and motility. Interacts with ECPAS. Interacts with NEO1. Interacts with ITGB1 and ITGB3. Interacts with VASP. Interacts with DCC and ITGB5; the presence of DCC inhibits ITGB5 binding. Interacts with tubulin; ITGB5 or DCC binding inhibits tubulin binding. In terms of processing, the initiator methionine for isoform Headless is removed. Ubiquitous.

The protein resides in the cytoplasm. It is found in the cytosol. The protein localises to the cell projection. Its subcellular location is the lamellipodium. It localises to the ruffle. The protein resides in the cytoskeleton. It is found in the filopodium tip. The protein localises to the cell cortex. Its subcellular location is the filopodium membrane. In terms of biological role, myosins are actin-based motor molecules with ATPase activity. Unconventional myosins serve in intracellular movements. MYO10 binds to actin filaments and actin bundles and functions as a plus end-directed motor. Moves with higher velocity and takes larger steps on actin bundles than on single actin filaments. The tail domain binds to membranous compartments containing phosphatidylinositol 3,4,5-trisphosphate or integrins, and mediates cargo transport along actin filaments. Regulates cell shape, cell spreading and cell adhesion. Stimulates the formation and elongation of filopodia. In hippocampal neurons it induces the formation of dendritic filopodia by trafficking the actin-remodeling protein VASP to the tips of filopodia, where it promotes actin elongation. Plays a role in formation of the podosome belt in osteoclasts. Functionally, functions as a dominant-negative regulator of isoform 1, suppressing its filopodia-inducing and axon outgrowth-promoting activities. In hippocampal neurons, it increases VASP retention in spine heads to induce spine formation and spine head expansion. This is Unconventional myosin-X (MYO10) from Homo sapiens (Human).